A 71-amino-acid chain; its full sequence is Conotoxin LvVIIB (71 aa).

The N-terminal stretch at 1-17 (VLIIAVLFLAASELVTA) is a signal peptide. Positions 18 to 42 (DYTRDEWQYRAASLRDAMRNFRDTR) are excised as a propeptide. Intrachain disulfides connect Cys-43/Cys-57, Cys-50/Cys-62, and Cys-56/Cys-69.

The protein belongs to the conotoxin O1 superfamily. Expressed by the venom duct.

Its subcellular location is the secreted. The polypeptide is Conotoxin LvVIIB (Conus lividus (Livid cone)).